The chain runs to 167 residues: HVA22-like protein b (167 aa).

3 helical membrane passes run 18–38 (VIAG…RAIE), 47–67 (QWLT…TFFR), and 68–88 (LLEW…WLVL).

Belongs to the DP1 family. In terms of tissue distribution, predominantly expressed in flower buds.

It localises to the membrane. The protein is HVA22-like protein b (HVA22B) of Arabidopsis thaliana (Mouse-ear cress).